We begin with the raw amino-acid sequence, 475 residues long: Putative aldehyde dehydrogenase SH0913 (475 aa).

201-207 provides a ligand contact to NAD(+); the sequence is GDGEGVG. Active-site residues include E245 and C279.

The protein belongs to the aldehyde dehydrogenase family.

It catalyses the reaction an aldehyde + NAD(+) + H2O = a carboxylate + NADH + 2 H(+). This is Putative aldehyde dehydrogenase SH0913 from Staphylococcus haemolyticus (strain JCSC1435).